A 366-amino-acid chain; its full sequence is Inhibin alpha chain (366 aa).

A signal peptide spans 1 to 18 (MVLHLLLFLLLTPQGGHS). Positions 19–61 (CQGLELARELVLAKVRALFLDALGPPAVTREGGDPGVRRLPRR) are excised as a propeptide. Residues 62 to 232 (HALGGFTHRG…PPSGGERARR (171 aa)) constitute a propeptide, inhibin alpha N-terminal region. 2 N-linked (GlcNAc...) asparagine glycosylation sites follow: N146 and N268. Cystine bridges form between C262–C328, C291–C363, and C295–C365. N-linked (GlcNAc...) asparagine; partial glycosylation occurs at N302.

The protein belongs to the TGF-beta family. Dimeric, linked by one or more disulfide bonds. Activin B is a dimer of alpha and beta-B. Inhibin A is a dimer of alpha and beta-A. Inhibin B is a dimer of alpha and beta-B. Interacts with TGFBR3L; this interaction regulates female fertility. Post-translationally, proteolytic processing yields a number of bioactive forms. The 20/23 kDa forms consist solely of the mature alpha chain, the 26/29 kDa forms consist of the most N-terminal propeptide linked through a disulfide bond to the mature alpha chain, the 50/53 kDa forms encompass the entire proprotein. Each type can be furthermore either mono- or diglycosylated, causing the mass difference. In terms of tissue distribution, originally found in ovary (granulosa cells) and testis (Sertoli cells), but widely distributed in many tissues including brain and placenta. In adrenal cortex expression is limited to the zona reticularis and the innermost zona fasciculata in the normal gland, extending centripetally into the zona fasciculata in hyperplasia. Also found in adrenocortical tumors. Also expressed in prostate epithelium of benign prostatic hyperplasia, in regions of basal cell hyperplasia and in nonmalignant regions of high grade prostate cancer. Only circulating inhibin B is found in male, whereas circulating inhibins A and B are found in female.

The protein localises to the secreted. Functionally, inhibins and activins inhibit and activate, respectively, the secretion of follitropin by the pituitary gland. Inhibins/activins are involved in regulating a number of diverse functions such as hypothalamic and pituitary hormone secretion, gonadal hormone secretion, germ cell development and maturation, erythroid differentiation, insulin secretion, nerve cell survival, embryonic axial development or bone growth, depending on their subunit composition. Inhibins appear to oppose the functions of activins. Inhibin A is a dimer of alpha/INHA and beta-A/INHBA that functions as a feedback regulator in the hypothalamic-pituitary-gonadal (HPG) axis. Inhibits the secretion of FSH from the anterior pituitary gland by acting on pituitary gonadotrope cells. Antagonizes activin A by binding to the proteoglycan, betaglycan, and forming a stable complex with and, thereby, sequestering type II activin receptors while excluding type I receptor. In terms of biological role, inhibin B is a dimer of alpha and beta-B that plays a crucial role in the regulation of the reproductive system by inhibiting the secretion of follicle-stimulating hormone (FSH) from the anterior pituitary gland. Thereby, maintains reproductive homeostasis in both males and females. Acts as a more potent suppressor of FSH release than inhibin A. Functions as competitive receptor antagonist binding activin type II receptors with high affinity in the presence of the TGF-beta type III coreceptor/TGFBR3L. The chain is Inhibin alpha chain (INHA) from Homo sapiens (Human).